Here is a 155-residue protein sequence, read N- to C-terminus: Small ribosomal subunit protein uS7cz/uS7cy (155 aa).

Belongs to the universal ribosomal protein uS7 family. Part of the 30S ribosomal subunit.

The protein localises to the plastid. It is found in the chloroplast. Its function is as follows. One of the primary rRNA binding proteins, it binds directly to 16S rRNA where it nucleates assembly of the head domain of the 30S subunit. The chain is Small ribosomal subunit protein uS7cz/uS7cy (rps7-A) from Lemna minor (Common duckweed).